The sequence spans 91 residues: Late embryogenesis abundant protein EMB564 (91 aa).

Composition is skewed to basic and acidic residues over residues 1–19 (MASG…REGE) and 32–51 (EAQE…RREQ). The disordered stretch occupies residues 1 to 91 (MASGQESRKE…VTIDESKFTK (91 aa)).

The protein belongs to the small hydrophilic plant seed protein family.

In terms of biological role, LEA proteins are late embryonic proteins abundant in higher plant seed embryos. They may play an essential role in seed survival and in controlling water exchanges during seed desiccation and imbibition. The sequence is that of Late embryogenesis abundant protein EMB564 from Zea mays (Maize).